The chain runs to 305 residues: D-alanine--D-alanine ligase (305 aa).

One can recognise an ATP-grasp domain in the interval 99–300 (KLFFEKAGIR…YEEMIQTFVN (202 aa)). An ATP-binding site is contributed by 126 to 181 (NFTGTYPVVVKPNQEGSTIGLTVAETEEELLQGIEEAFRHDDTILIEEFIAGTEVT).

The protein belongs to the D-alanine--D-alanine ligase family.

Its subcellular location is the cytoplasm. The enzyme catalyses 2 D-alanine + ATP = D-alanyl-D-alanine + ADP + phosphate + H(+). The protein operates within cell wall biogenesis; peptidoglycan biosynthesis. Functionally, cell wall formation. In Halalkalibacterium halodurans (strain ATCC BAA-125 / DSM 18197 / FERM 7344 / JCM 9153 / C-125) (Bacillus halodurans), this protein is D-alanine--D-alanine ligase.